We begin with the raw amino-acid sequence, 146 residues long: ATP synthase epsilon chain (146 aa).

The span at 92 to 116 shows a compositional bias: basic and acidic residues; that stretch reads ISVDQARRDRDSLRKKLNEHERSEQ. The interval 92–120 is disordered; sequence ISVDQARRDRDSLRKKLNEHERSEQDPEV.

This sequence belongs to the ATPase epsilon chain family. In terms of assembly, F-type ATPases have 2 components, CF(1) - the catalytic core - and CF(0) - the membrane proton channel. CF(1) has five subunits: alpha(3), beta(3), gamma(1), delta(1), epsilon(1). CF(0) has three main subunits: a, b and c.

It is found in the cell membrane. In terms of biological role, produces ATP from ADP in the presence of a proton gradient across the membrane. This chain is ATP synthase epsilon chain, found in Cutibacterium acnes (strain DSM 16379 / KPA171202) (Propionibacterium acnes).